A 2291-amino-acid polypeptide reads, in one-letter code: Protein Ycf2 B (2291 aa).

An ATP-binding site is contributed by 1642–1649 (GSIGTGRS).

The protein belongs to the Ycf2 family.

The protein localises to the plastid. It is found in the chloroplast stroma. Probable ATPase of unknown function. Its presence in a non-photosynthetic plant (Epifagus virginiana) and experiments in tobacco indicate that it has an essential function which is probably not related to photosynthesis. In Atropa belladonna (Belladonna), this protein is Protein Ycf2 B (ycf2-B).